The following is a 657-amino-acid chain: ABC1 family protein YPL109C, mitochondrial (657 aa).

Residues 1–15 (MSFLKFAYRNSWRYY) constitute a mitochondrion transit peptide.

Belongs to the protein kinase superfamily. ADCK protein kinase family.

It is found in the mitochondrion. The chain is ABC1 family protein YPL109C, mitochondrial from Saccharomyces cerevisiae (strain ATCC 204508 / S288c) (Baker's yeast).